Consider the following 209-residue polypeptide: uncharacterized protein (209 aa).

This is an uncharacterized protein from Escherichia coli (strain K12).